Here is a 237-residue protein sequence, read N- to C-terminus: DCN1-like protein 5 (237 aa).

S9, S41, and S48 each carry phosphoserine. The region spanning 46–232 (FSSKKCLAWF…LLDEFVEWQK (187 aa)) is the DCUN1 domain.

In terms of assembly, part of a complex that contains DCUN1D5, CUL1 and RBX1; this interaction is bridged by CUL1. Interacts (via the DCUN1 domain) with the unneddylated cullins: interacts with CUL1, CUL2, CUL3, CUL4A, CUL4B and CUL5; these interactions promote the cullin neddylation and the identity of the cullin dictates the affinity of the interaction. Interacts (via DCUN1 domain) with UBE2M (N-terminally acetylated form) and probably with UBE2F (N-terminally acetylated form). May also interact with regulators or subunits of cullin-RING ligases such as RBX1, RNF7, ELOB and DDB1; these interactions are bridged by cullins. Interacts with CAND1; this interaction is bridged by cullins and strongly inhibits the neddylation of cullins. These CAND-cullin-DCNL complexes can only be neddylated in the presence of a substrate adapter. Post-translationally, phosphorylation at Ser-41 is independent of cullin's interaction. Phosphorylated in response to both TICAM1 and MYD88 dependent Toll-like receptor (TLR) pathway activation. Phosphorylated in response to IL1B stimulation.

It localises to the nucleus. It is found in the cytoplasm. The protein localises to the cytoskeleton. The protein resides in the spindle. Functionally, contributes to the neddylation of all cullins by transferring NEDD8 from N-terminally acetylated NEDD8-conjugating E2s enzyme to different cullin C-terminal domain-RBX complexes which is necessary for the activation of cullin-RING E3 ubiquitin ligases (CRLs). May play a role in DNA damage response and may participate in cell proliferation and anchorage-independent cell growth. The protein is DCN1-like protein 5 of Pongo abelii (Sumatran orangutan).